We begin with the raw amino-acid sequence, 111 residues long: Putative protein YddJ (111 aa).

This chain is Putative protein YddJ (yddJ), found in Escherichia coli (strain K12).